A 339-amino-acid chain; its full sequence is Ketol-acid reductoisomerase (NADP(+)) (339 aa).

The region spanning 1–182 (MRVYYDRDAD…GGGRAGIIET (182 aa)) is the KARI N-terminal Rossmann domain. NADP(+) is bound by residues 24–27 (YGSQ), R48, S51, T53, and 83–86 (DELQ). Residue H108 is part of the active site. G134 is a binding site for NADP(+). In terms of domain architecture, KARI C-terminal knotted spans 183–328 (TFREECETDL…AKLRAMMPWI (146 aa)). Mg(2+) is bound by residues D191, E195, E227, and E231. A substrate-binding site is contributed by S252.

Belongs to the ketol-acid reductoisomerase family. Mg(2+) serves as cofactor.

The enzyme catalyses (2R)-2,3-dihydroxy-3-methylbutanoate + NADP(+) = (2S)-2-acetolactate + NADPH + H(+). It catalyses the reaction (2R,3R)-2,3-dihydroxy-3-methylpentanoate + NADP(+) = (S)-2-ethyl-2-hydroxy-3-oxobutanoate + NADPH + H(+). It participates in amino-acid biosynthesis; L-isoleucine biosynthesis; L-isoleucine from 2-oxobutanoate: step 2/4. It functions in the pathway amino-acid biosynthesis; L-valine biosynthesis; L-valine from pyruvate: step 2/4. In terms of biological role, involved in the biosynthesis of branched-chain amino acids (BCAA). Catalyzes an alkyl-migration followed by a ketol-acid reduction of (S)-2-acetolactate (S2AL) to yield (R)-2,3-dihydroxy-isovalerate. In the isomerase reaction, S2AL is rearranged via a Mg-dependent methyl migration to produce 3-hydroxy-3-methyl-2-ketobutyrate (HMKB). In the reductase reaction, this 2-ketoacid undergoes a metal-dependent reduction by NADPH to yield (R)-2,3-dihydroxy-isovalerate. This is Ketol-acid reductoisomerase (NADP(+)) from Methylocella silvestris (strain DSM 15510 / CIP 108128 / LMG 27833 / NCIMB 13906 / BL2).